A 234-amino-acid polypeptide reads, in one-letter code: Covalently-linked cell wall protein 14 (234 aa).

An N-terminal signal peptide occupies residues 1–22; sequence MASFLKISTLIAIVSTLQTTLA. The 87-residue stretch at 23 to 109 folds into the CFEM domain; sequence APPACLLACV…SSEESSASAS (87 aa). Disulfide bonds link Cys-27–Cys-66, Cys-31–Cys-61, Cys-41–Cys-49, and Cys-51–Cys-82. Asp-46 contacts heme. The segment covering 86 to 207 has biased composition (low complexity); that stretch reads SSQSSSSESE…ASSSESTTAT (122 aa). A disordered region spans residues 86–208; it reads SSQSSSSESE…SSSESTTATG (123 aa). Residue Gly-215 is the site of GPI-anchor amidated glycine attachment. The propeptide at 216–234 is removed in mature form; the sequence is SAAKVGLGALVGLVGAVLL.

It belongs to the CCW14 family. Post-translationally, the GPI-anchor is attached to the protein in the endoplasmic reticulum and serves to target the protein to the cell surface. There, the glucosamine-inositol phospholipid moiety is cleaved off and the GPI-modified mannoprotein is covalently attached via its lipidless GPI glycan remnant to the 1,6-beta-glucan of the outer cell wall layer.

The protein resides in the secreted. It is found in the cell wall. It localises to the membrane. Beta-glucan associated cell wall protein involved in cell wall structure. May serve as cross-linking or coat-forming wall protein. The protein is Covalently-linked cell wall protein 14 (SSR1) of Candida albicans (strain SC5314 / ATCC MYA-2876) (Yeast).